A 562-amino-acid polypeptide reads, in one-letter code: Arginine--tRNA ligase (562 aa).

Residues 136–146 (ANPTGPMHMGN) carry the 'HIGH' region motif.

It belongs to the class-I aminoacyl-tRNA synthetase family. Monomer.

The protein resides in the cytoplasm. The catalysed reaction is tRNA(Arg) + L-arginine + ATP = L-arginyl-tRNA(Arg) + AMP + diphosphate. The protein is Arginine--tRNA ligase (argS) of Caldanaerobacter subterraneus subsp. tengcongensis (strain DSM 15242 / JCM 11007 / NBRC 100824 / MB4) (Thermoanaerobacter tengcongensis).